Reading from the N-terminus, the 172-residue chain is C-phycocyanin beta chain (172 aa).

(2R,3E)-phycocyanobilin-binding positions include N35, D39, N72, R77, C82, 82-88 (CLRDMEI), 149-151 (TIG), and C153. Position 72 is an N4-methylasparagine (N72).

The protein belongs to the phycobiliprotein family. As to quaternary structure, heterodimer of an alpha and a beta subunit, which further assembles into trimers and the trimers into hexamers. The basic functional unit of phycobiliproteins is a ring-shaped hexamer formed from two back-to-back trimers contacting via the alpha chain subunits. The trimers are composed of alpha/beta subunit heterodimers arranged around a three-fold axis of symmetry. The phycoerythrins also contain a gamma subunit which is located in the center of the hexamer. Contains two covalently linked phycocyanobilin chromophores.

It is found in the plastid. The protein resides in the chloroplast thylakoid membrane. In terms of biological role, light-harvesting photosynthetic tetrapyrrole chromophore-protein from the phycobiliprotein complex (phycobilisome, PBS). Phycocyanin is the major phycobiliprotein in the PBS rod. This Cyanidium caldarium (Red alga) protein is C-phycocyanin beta chain (cpcB).